Here is a 395-residue protein sequence, read N- to C-terminus: Octopamine receptor beta-2R (395 aa).

Topologically, residues 1–42 are extracellular; sequence MDPINGSHSGANATISDITNGAYNATDAGEWTSSVMFKLRTC. 3 N-linked (GlcNAc...) asparagine glycosylation sites follow: Asn5, Asn12, and Asn24. A helical membrane pass occupies residues 43 to 63; the sequence is VLLLIVIMAVLGNMLVIVSVM. The Cytoplasmic segment spans residues 64–74; sequence RHRKLRVITNY. The helical transmembrane segment at 75 to 95 threads the bilayer; that stretch reads FVVSLAFADILVAMVVMPFNF. At 96–117 the chain is on the extracellular side; it reads SVQFNQGWVFGETICDLWNSSD. The N-linked (GlcNAc...) asparagine glycan is linked to Asn114. The chain crosses the membrane as a helical span at residues 118–140; sequence VYFTSTSILHLCCISVDRYYAIV. Over 141 to 154 the chain is Cytoplasmic; the sequence is KPLKYPIKMTKKMA. The chain crosses the membrane as a helical span at residues 155–175; the sequence is FVMLAATWLSPITISYVPIFM. Topologically, residues 176–202 are extracellular; that stretch reads GWYTTTDFLESRRDDQCEFKVNKPYAV. A helical membrane pass occupies residues 203–223; the sequence is ISSSISFWIPCTIMIFTYLAI. The Cytoplasmic portion of the chain corresponds to 224-282; the sequence is FKEANRQEKALHARAGNAMLMHRHSREVSDKNGALHINATTPTKDRNLLKMKREHKAAR. Residues 283-303 traverse the membrane as a helical segment; that stretch reads TLGIIMGAFILCWLPFFLYYV. The Extracellular portion of the chain corresponds to 304-315; sequence STSLCDSCNCPE. A helical transmembrane segment spans residues 316–336; sequence VVTVIMFWTGYFNSALNPIIY. Residues 337 to 395 lie on the Cytoplasmic side of the membrane; that stretch reads AYFNRDFRNAFKNTLACAFCSFCKRSASDLDAMERLDRRGSAQLRVPIPSRRASDLASL.

It belongs to the G-protein coupled receptor 1 family.

It localises to the cell membrane. Its function is as follows. Autoreceptor for octopamine, which is a neurotransmitter, neurohormone, and neuromodulator in invertebrates. Also acts as a receptor for tyramine, but with much less potency. The activity of this receptor is mediated by G proteins which activate adenylyl cyclase. The protein is Octopamine receptor beta-2R of Chilo suppressalis (Asiatic rice borer moth).